A 372-amino-acid chain; its full sequence is Glutamate 5-kinase (372 aa).

Lysine 14 contacts ATP. Serine 54, aspartate 141, and asparagine 153 together coordinate substrate. 173–174 (TD) contributes to the ATP binding site. Residues 280–358 (RGHVVIDAGA…GEIESVLGYM (79 aa)) form the PUA domain.

Belongs to the glutamate 5-kinase family.

Its subcellular location is the cytoplasm. The catalysed reaction is L-glutamate + ATP = L-glutamyl 5-phosphate + ADP. The protein operates within amino-acid biosynthesis; L-proline biosynthesis; L-glutamate 5-semialdehyde from L-glutamate: step 1/2. In terms of biological role, catalyzes the transfer of a phosphate group to glutamate to form L-glutamate 5-phosphate. The polypeptide is Glutamate 5-kinase (Burkholderia multivorans (strain ATCC 17616 / 249)).